We begin with the raw amino-acid sequence, 362 residues long: 3-dehydroquinate synthase (362 aa).

Residues 71–76 (DGEQYK), 105–109 (GVVGD), 129–130 (TT), lysine 142, lysine 151, and 169–172 (CLKT) contribute to the NAD(+) site. The Zn(2+) site is built by glutamate 184, histidine 247, and histidine 264.

It belongs to the sugar phosphate cyclases superfamily. Dehydroquinate synthase family. Co(2+) is required as a cofactor. Zn(2+) serves as cofactor. Requires NAD(+) as cofactor.

The protein localises to the cytoplasm. The catalysed reaction is 7-phospho-2-dehydro-3-deoxy-D-arabino-heptonate = 3-dehydroquinate + phosphate. Its pathway is metabolic intermediate biosynthesis; chorismate biosynthesis; chorismate from D-erythrose 4-phosphate and phosphoenolpyruvate: step 2/7. Catalyzes the conversion of 3-deoxy-D-arabino-heptulosonate 7-phosphate (DAHP) to dehydroquinate (DHQ). The protein is 3-dehydroquinate synthase of Shigella flexneri serotype 5b (strain 8401).